An 884-amino-acid polypeptide reads, in one-letter code: Protein argonaute-4 (884 aa).

Residues 242-361 (PVIEFMCEVL…LPLEVCNIVA (120 aa)) enclose the PAZ domain. Positions 532–843 (LIVVILPGKT…VAFRARYHLV (312 aa)) constitute a Piwi domain. The segment at 848 to 870 (DSAEGSHVSGQSNGRDPQALAKA) is disordered.

It belongs to the argonaute family. Ago subfamily.

The protein localises to the cytoplasm. It localises to the P-body. Required for RNA-mediated gene silencing (RNAi). Binds to short RNAs such as microRNAs (miRNAs) and represses the translation of mRNAs which are complementary to them. Lacks endonuclease activity and does not appear to cleave target mRNAs. The sequence is that of Protein argonaute-4 (ago4) from Xenopus laevis (African clawed frog).